Consider the following 113-residue polypeptide: Bactofilin BacN (113 aa).

Belongs to the bactofilin family. As to quaternary structure, interacts with BacO and BacP, the 3 proteins colocalize as an extended structure.

It localises to the cytoplasm. Its subcellular location is the cytoskeleton. A non-essential component of the chromosome segregation machinery. Positions the ParA-ParB-parS chromosome segregation machinery within the cell; BacP seems to be the most important bactofilin in this process. Forms a heteropolymeric, subpolar scaffold in the cell; BacP probably forms the core, BacO contributes to position and integrity while BacN does not seem to contribute to assembly. In Myxococcus xanthus (strain DK1622), this protein is Bactofilin BacN.